A 216-amino-acid polypeptide reads, in one-letter code: Pyridoxine/pyridoxamine 5'-phosphate oxidase (216 aa).

FMN contacts are provided by residues 65-70, 80-81, Arg-86, Lys-87, and Gln-109; these read RMVLLK and YT. Residue Lys-70 participates in substrate binding. Tyr-127, Arg-131, and Ser-135 together coordinate substrate. FMN contacts are provided by residues 144–145 and Trp-189; that span reads QS. Residue 195–197 participates in substrate binding; it reads RLH. An FMN-binding site is contributed by Arg-199.

Belongs to the pyridoxamine 5'-phosphate oxidase family. Homodimer. The cofactor is FMN.

It carries out the reaction pyridoxamine 5'-phosphate + O2 + H2O = pyridoxal 5'-phosphate + H2O2 + NH4(+). The enzyme catalyses pyridoxine 5'-phosphate + O2 = pyridoxal 5'-phosphate + H2O2. Its pathway is cofactor metabolism; pyridoxal 5'-phosphate salvage; pyridoxal 5'-phosphate from pyridoxamine 5'-phosphate: step 1/1. It participates in cofactor metabolism; pyridoxal 5'-phosphate salvage; pyridoxal 5'-phosphate from pyridoxine 5'-phosphate: step 1/1. In terms of biological role, catalyzes the oxidation of either pyridoxine 5'-phosphate (PNP) or pyridoxamine 5'-phosphate (PMP) into pyridoxal 5'-phosphate (PLP). The chain is Pyridoxine/pyridoxamine 5'-phosphate oxidase from Sphingopyxis alaskensis (strain DSM 13593 / LMG 18877 / RB2256) (Sphingomonas alaskensis).